The following is an 89-amino-acid chain: Small ribosomal subunit protein uS15 (89 aa).

This sequence belongs to the universal ribosomal protein uS15 family. Part of the 30S ribosomal subunit. Forms a bridge to the 50S subunit in the 70S ribosome, contacting the 23S rRNA.

One of the primary rRNA binding proteins, it binds directly to 16S rRNA where it helps nucleate assembly of the platform of the 30S subunit by binding and bridging several RNA helices of the 16S rRNA. Functionally, forms an intersubunit bridge (bridge B4) with the 23S rRNA of the 50S subunit in the ribosome. This Cellvibrio japonicus (strain Ueda107) (Pseudomonas fluorescens subsp. cellulosa) protein is Small ribosomal subunit protein uS15.